We begin with the raw amino-acid sequence, 143 residues long: Large ribosomal subunit protein uL11 (143 aa).

The protein belongs to the universal ribosomal protein uL11 family. As to quaternary structure, part of the ribosomal stalk of the 50S ribosomal subunit. Interacts with L10 and the large rRNA to form the base of the stalk. L10 forms an elongated spine to which L12 dimers bind in a sequential fashion forming a multimeric L10(L12)X complex. Post-translationally, one or more lysine residues are methylated.

In terms of biological role, forms part of the ribosomal stalk which helps the ribosome interact with GTP-bound translation factors. The protein is Large ribosomal subunit protein uL11 of Bifidobacterium longum subsp. infantis (strain ATCC 15697 / DSM 20088 / JCM 1222 / NCTC 11817 / S12).